The chain runs to 352 residues: UDP-N-acetylglucosamine--N-acetylmuramyl-(pentapeptide) pyrophosphoryl-undecaprenol N-acetylglucosamine transferase (352 aa).

Residues S195 and Q287 each contribute to the UDP-N-acetyl-alpha-D-glucosamine site.

It belongs to the glycosyltransferase 28 family. MurG subfamily.

The protein resides in the cell membrane. The catalysed reaction is Mur2Ac(oyl-L-Ala-gamma-D-Glu-L-Lys-D-Ala-D-Ala)-di-trans,octa-cis-undecaprenyl diphosphate + UDP-N-acetyl-alpha-D-glucosamine = beta-D-GlcNAc-(1-&gt;4)-Mur2Ac(oyl-L-Ala-gamma-D-Glu-L-Lys-D-Ala-D-Ala)-di-trans,octa-cis-undecaprenyl diphosphate + UDP + H(+). The protein operates within cell wall biogenesis; peptidoglycan biosynthesis. Its function is as follows. Cell wall formation. Catalyzes the transfer of a GlcNAc subunit on undecaprenyl-pyrophosphoryl-MurNAc-pentapeptide (lipid intermediate I) to form undecaprenyl-pyrophosphoryl-MurNAc-(pentapeptide)GlcNAc (lipid intermediate II). This chain is UDP-N-acetylglucosamine--N-acetylmuramyl-(pentapeptide) pyrophosphoryl-undecaprenol N-acetylglucosamine transferase, found in Streptococcus pneumoniae (strain CGSP14).